Reading from the N-terminus, the 327-residue chain is Phosphate acyltransferase (327 aa).

This sequence belongs to the PlsX family. As to quaternary structure, homodimer. Probably interacts with PlsY.

It is found in the cytoplasm. It carries out the reaction a fatty acyl-[ACP] + phosphate = an acyl phosphate + holo-[ACP]. It functions in the pathway lipid metabolism; phospholipid metabolism. Its function is as follows. Catalyzes the reversible formation of acyl-phosphate (acyl-PO(4)) from acyl-[acyl-carrier-protein] (acyl-ACP). This enzyme utilizes acyl-ACP as fatty acyl donor, but not acyl-CoA. The protein is Phosphate acyltransferase of Mycoplasma mobile (strain ATCC 43663 / 163K / NCTC 11711) (Mesomycoplasma mobile).